Consider the following 765-residue polypeptide: Proton-coupled zinc antiporter SLC30A5 (765 aa).

Methionine 1 is subject to N-acetylmethionine. Residues 1–32 (MEEKYGGDVLAGPGGGGGLGPVDVPSARLTKY) are Cytoplasmic-facing. The chain crosses the membrane as a helical span at residues 33–53 (IVLLCFTKFLKAVGLFESYDL). The Lumenal portion of the chain corresponds to 54–56 (LKA). A helical transmembrane segment spans residues 57–77 (VHIVQFIFILKLGTAFFMVLF). Topologically, residues 78 to 98 (QKPFSSGKTITKHQWIKIFKH) are cytoplasmic. A helical membrane pass occupies residues 99–119 (AVAGCIISLLWFFGLTLCGPL). Residue arginine 120 is a topological domain, lumenal. The chain crosses the membrane as a helical span at residues 121-141 (TLLLFEHSDIVVISLLSVLFT). The Cytoplasmic segment spans residues 142-152 (SSGGGPAKTRG). A helical membrane pass occupies residues 153 to 173 (AAFFIIAVICLLLFDNDDLMA). The Lumenal portion of the chain corresponds to 174 to 193 (KMAEHPEGHHDSALTHMLYT). A helical membrane pass occupies residues 194–214 (AIAFLGVADHKGGVLLLVLAL). Residues 215–238 (CCKVGFHTASRKLSVDVGGAKRLQ) lie on the Cytoplasmic side of the membrane. Residues 239–259 (ALSHLVSVLLLCPWVIVLSVT) form a helical membrane-spanning segment. Topologically, residues 260-267 (TESKVESW) are lumenal. The chain crosses the membrane as a helical span at residues 268 to 288 (FSLIMPFATVIFFVMILDFYV). Residues 289–303 (DSICSVKMEVSKCAR) are Cytoplasmic-facing. A helical transmembrane segment spans residues 304-324 (YGSFPIFISALLFGNFWTHPI). Residues 325 to 342 (TDQLRAMNKAAHQESTEH) are Lumenal-facing. A helical membrane pass occupies residues 343–363 (VLSGGVVVSAIFFILSANILS). The Cytoplasmic portion of the chain corresponds to 364-418 (SPSKRGQKGTLIGYSPEGTPLYNFMGDAFQHSSQSIPRFIKESLKQILEESDSRQ). The chain crosses the membrane as a helical span at residues 419-439 (IFYFLCLNLLFTFVELFYGVL). The interval 420–640 (FYFLCLNLLF…ILIFLSVVPL (221 aa)) is mediates homodimerization with SLC30A6. Topologically, residues 440–448 (TNSLGLISD) are lumenal. Residues 449–469 (GFHMLFDCSALVMGLFAALMS) traverse the membrane as a helical segment. 2 residues coordinate Zn(2+): histidine 451 and aspartate 455. Over 470–483 (RWKATRIFSYGYGR) the chain is Cytoplasmic. Residues 484-504 (IEILSGFINGLFLIVIAFFVF) traverse the membrane as a helical segment. Topologically, residues 505 to 520 (MESVARLIDPPELDTH) are lumenal. The helical transmembrane segment at 521–541 (MLTPVSVGGLIVNLIGICAFS) threads the bilayer. A his-rich loop; required for zinc transport region spans residues 542–578 (HAHSHAHGASQGSCHSSDHSHSHHMHGHSDHGHGHSH). Residues 542–592 (HAHSHAHGASQGSCHSSDHSHSHHMHGHSDHGHGHSHGSAGGGMNANMRGV) are Cytoplasmic-facing. The segment at 551–581 (SQGSCHSSDHSHSHHMHGHSDHGHGHSHGSA) is disordered. A helical membrane pass occupies residues 593–613 (FLHVLADTLGSIGVIVSTVLI). Histidine 595 and aspartate 599 together coordinate Zn(2+). At 614–617 (EQFG) the chain is on the lumenal side. Residues 618-638 (WFIADPLCSLFIAILIFLSVV) form a helical membrane-spanning segment. Residues 639–765 (PLIKDACQVL…KYCKDGTYIM (127 aa)) lie on the Cytoplasmic side of the membrane.

The protein belongs to the cation diffusion facilitator (CDF) transporter (TC 2.A.4) family. SLC30A subfamily. In terms of assembly, heterodimer with SLC30A6/ZNT6; form a functional zinc ion transmembrane transporter. Post-translationally, could homodimerize through the formation of dityrosine bonds upon oxidative stress. Ubiquitously expressed. Highly expressed in pancreas, liver and kidney. Expressed abundantly in insulin-containing beta cells, undetectable in other endocrine cell types including glucagon-secreting alpha cells and most acinar cells (at protein level).

It is found in the golgi apparatus. The protein localises to the golgi stack membrane. It localises to the cytoplasmic vesicle. The protein resides in the COPII-coated vesicle membrane. Its subcellular location is the secretory vesicle membrane. It is found in the trans-Golgi network membrane. The protein localises to the endoplasmic reticulum membrane. It localises to the cell membrane. The protein resides in the apical cell membrane. The enzyme catalyses Zn(2+)(in) + 2 H(+)(out) = Zn(2+)(out) + 2 H(+)(in). In terms of biological role, together with SLC30A6 forms a functional proton-coupled zinc ion antiporter mediating zinc entry into the lumen of organelles along the secretory pathway. By contributing to zinc ion homeostasis within the early secretory pathway, regulates the activation and folding of enzymes like alkaline phosphatases and enzymes involved in phosphatidylinositol glycan anchor biosynthesis. Through the transport of zinc into secretory granules of pancreatic beta-cells, plays an important role in the storage and secretion of insulin. Functionally, zinc ion:proton antiporter mediating influx and efflux of zinc at the plasma membrane. The chain is Proton-coupled zinc antiporter SLC30A5 from Homo sapiens (Human).